The chain runs to 479 residues: Odorant receptor coreceptor (479 aa).

The Cytoplasmic segment spans residues 1–43 (MHVQPTKYHGLVLDLMPNIRLMQGFGHFLFRYVSGPVLIRKLY). A helical transmembrane segment spans residues 44-64 (SWWNLIMILLQYFAIMGNLVM). The Extracellular portion of the chain corresponds to 65–73 (NTGDVNELT). Residues 74 to 94 (ANTITTLFFTHSVTKFIYVAV) form a helical membrane-spanning segment. At 95–133 (NSEHFYRTLGIWNQPNSHSLFAESDARYHSIALAKMRKL) the chain is on the cytoplasmic side. Residues 134–154 (LVMVMVTTVLSVVAWITITFF) form a helical membrane-spanning segment. Residues 155-187 (GDSVKNVFDKETNETYTVEIPRLPIKALYPWDA) are Extracellular-facing. Asn167 carries N-linked (GlcNAc...) asparagine glycosylation. A helical transmembrane segment spans residues 188-208 (MSGVPYFFSFVYQAYFLLFSM). The Cytoplasmic segment spans residues 209 to 344 (CQANLADVMF…VERHKHVVRL (136 aa)). Residues 345-365 (VSAIGETYGAALLLHMLTSTI) traverse the membrane as a helical segment. Topologically, residues 366–383 (KLTLLAYQATKIDALNVY) are extracellular. Residues 384–404 (GLTVIGYLVYALAQVFLFCIF) traverse the membrane as a helical segment. Over 405–455 (GNRLIEESSSVMEAAYSCHWYDGSEEAKTFVQIVCQQCQKAMTISGAKFFT) the chain is Cytoplasmic. Residues 456–476 (VSLDLFASVLGAVVTYFMVLV) form a helical membrane-spanning segment. Residues 477–479 (QLK) lie on the Extracellular side of the membrane.

It belongs to the insect chemoreceptor superfamily. Heteromeric odorant receptor channel (TC 1.A.69) family. Orco subfamily. As to quaternary structure, heterodimer with conventional odorant receptors (ORs). In terms of tissue distribution, expressed in female antenna, maxillary palp and proboscis. Not detected in male tissues.

It is found in the cell membrane. Its function is as follows. Odorant coreceptor which complexes with conventional odorant receptors (ORs) to form odorant-sensing units, providing sensitive and prolonged odorant signaling and calcium permeability. Orco is a universal and integral part of the functional odorant receptor, involved in the dendritic localization of other olfactory receptors. Required for detecting a host for blood feeding. Plays a key role in preferred attraction of females for humans over non-human hosts for blood feeding. This is Odorant receptor coreceptor from Aedes albopictus (Asian tiger mosquito).